Reading from the N-terminus, the 327-residue chain is AA9 family lytic polysaccharide monooxygenase G (327 aa).

An N-terminal signal peptide occupies residues 1–20 (MKLNLASLCFLASIAPLVSG). Cu(2+) contacts are provided by histidine 21 and histidine 96. Cysteines 62 and 185 form a disulfide. O2 is bound at residue histidine 172. Tyrosine 182 contacts Cu(2+). N-linked (GlcNAc...) asparagine glycosylation is present at asparagine 290. The 37-residue stretch at 291 to 327 (GTIKKYYQCGGQGWTGSGSCEAGTSCREWNTWYFQCV) folds into the CBM1 domain.

It belongs to the polysaccharide monooxygenase AA9 family. Cu(2+) is required as a cofactor.

It localises to the secreted. The enzyme catalyses [(1-&gt;4)-beta-D-glucosyl]n+m + reduced acceptor + O2 = 4-dehydro-beta-D-glucosyl-[(1-&gt;4)-beta-D-glucosyl]n-1 + [(1-&gt;4)-beta-D-glucosyl]m + acceptor + H2O.. Functionally, lytic polysaccharide monooxygenase (LPMO) that depolymerizes crystalline and amorphous polysaccharides via the oxidation of scissile alpha- or beta-(1-4)-glycosidic bonds, yielding C1 or C4 oxidation products. Catalysis by LPMOs requires the reduction of the active-site copper from Cu(II) to Cu(I) by a reducing agent and H(2)O(2) or O(2) as a cosubstrate. This Aspergillus tamarii protein is AA9 family lytic polysaccharide monooxygenase G.